The following is a 291-amino-acid chain: Aspartate carbamoyltransferase catalytic subunit (291 aa).

Arginine 47 and threonine 48 together coordinate carbamoyl phosphate. Lysine 75 provides a ligand contact to L-aspartate. Residues arginine 97, histidine 126, and glutamine 129 each contribute to the carbamoyl phosphate site. L-aspartate is bound by residues arginine 159 and arginine 213. Residues glycine 251 and proline 252 each contribute to the carbamoyl phosphate site.

It belongs to the aspartate/ornithine carbamoyltransferase superfamily. ATCase family. In terms of assembly, heterododecamer (2C3:3R2) of six catalytic PyrB chains organized as two trimers (C3), and six regulatory PyrI chains organized as three dimers (R2).

The enzyme catalyses carbamoyl phosphate + L-aspartate = N-carbamoyl-L-aspartate + phosphate + H(+). Its pathway is pyrimidine metabolism; UMP biosynthesis via de novo pathway; (S)-dihydroorotate from bicarbonate: step 2/3. In terms of biological role, catalyzes the condensation of carbamoyl phosphate and aspartate to form carbamoyl aspartate and inorganic phosphate, the committed step in the de novo pyrimidine nucleotide biosynthesis pathway. This is Aspartate carbamoyltransferase catalytic subunit from Aquifex aeolicus (strain VF5).